A 94-amino-acid polypeptide reads, in one-letter code: UPF0235 protein Dred_0717 (94 aa).

This sequence belongs to the UPF0235 family.

The sequence is that of UPF0235 protein Dred_0717 from Desulforamulus reducens (strain ATCC BAA-1160 / DSM 100696 / MI-1) (Desulfotomaculum reducens).